The chain runs to 544 residues: Lysophosphatidylcholine acyltransferase 2 (544 aa).

At 1-58 the chain is on the cytoplasmic side; that stretch reads MNRCAEAAAVAATVPGSGVGDSGLRPPMVPRQASFFPPPVPNPFVQQTRISAARRLQM. Residues 59–79 form a helical; Signal-anchor for type II membrane protein membrane-spanning segment; the sequence is ILLGIILLPVRALLVGLVLLL. The Lumenal portion of the chain corresponds to 80–544; that stretch reads AWPFAVISTV…EEGTSGKKVD (465 aa). The short motif at 146–151 is the HXXXXD motif element; sequence HSTFFD. The short motif at 220–223 is the EGTC motif element; it reads EGTC. EF-hand domains follow at residues 391-426 and 428-463; these read PVSDVLRQLFALFDRNNDGSIDFREYVIGLAVLCNP and NTEDIIQVAFKLFDVDEDGYITEEEFCTILQASLGV. Residues aspartate 404, asparagine 406, aspartate 408, serine 410, glutamate 415, aspartate 441, aspartate 443, aspartate 445, tyrosine 447, and glutamate 452 each coordinate Ca(2+). Over residues 520–530 the composition is skewed to polar residues; sequence TAPSVASNKVS. A disordered region spans residues 520-544; it reads TAPSVASNKVSPESHEEGTSGKKVD. Basic and acidic residues predominate over residues 531-544; it reads PESHEEGTSGKKVD.

This sequence belongs to the 1-acyl-sn-glycerol-3-phosphate acyltransferase family.

The protein localises to the endoplasmic reticulum membrane. Its subcellular location is the golgi apparatus membrane. The protein resides in the cell membrane. It is found in the lipid droplet. It catalyses the reaction a 1-acyl-sn-glycero-3-phosphocholine + an acyl-CoA = a 1,2-diacyl-sn-glycero-3-phosphocholine + CoA. The catalysed reaction is a 1-O-alkyl-sn-glycero-3-phosphocholine + acetyl-CoA = a 1-O-alkyl-2-acetyl-sn-glycero-3-phosphocholine + CoA. The enzyme catalyses a 1-acyl-sn-glycero-3-phosphate + an acyl-CoA = a 1,2-diacyl-sn-glycero-3-phosphate + CoA. It carries out the reaction a 1-O-(1Z-alkenyl)-sn-glycero-3-phosphocholine + an acyl-CoA = a 1-O-(1Z-alkenyl)-2-acyl-sn-glycero-3-phosphocholine + CoA. It catalyses the reaction 1-hexadecanoyl-sn-glycero-3-phosphate + (9Z)-octadecenoyl-CoA = 1-hexadecanoyl-2-(9Z-octadecenoyl)-sn-glycero-3-phosphate + CoA. The catalysed reaction is 1-(9Z-octadecenoyl)-sn-glycero-3-phosphate + (9Z)-octadecenoyl-CoA = 1,2-di-(9Z-octadecenoyl)-sn-glycero-3-phosphate + CoA. The enzyme catalyses 1-(9Z-octadecenoyl)-sn-glycero-3-phosphate + hexadecanoyl-CoA = 1-(9Z)-octadecenoyl-2-hexadecanoyl-sn-glycero-3-phosphate + CoA. It carries out the reaction 1-heptadecanoyl-sn-glycero-3-phosphate + (9Z)-octadecenoyl-CoA = 1-heptadecanoyl-2-(9Z)-octadecenoyl-sn-glycero-3-phosphate + CoA. It catalyses the reaction 1-octadecanoyl-sn-glycero-3-phosphate + (9Z)-octadecenoyl-CoA = 1-octadecanoyl-2-(9Z-octadecenoyl)-sn-glycero-3-phosphate + CoA. The catalysed reaction is heptadecanoyl-CoA + 1-(9Z-octadecenoyl)-sn-glycero-3-phosphate = 1-(9Z)-octadecenoyl-2-heptadecanoyl-sn-glycero-3-phosphate + CoA. The enzyme catalyses 1-(9Z-octadecenoyl)-sn-glycero-3-phosphate + (9Z,12Z)-octadecadienoyl-CoA = 1-(9Z)-octadecenoyl-2-(9Z,12Z)-octadecadienoyl-sn-glycero-3-phosphate + CoA. It carries out the reaction 1-(9Z-octadecenoyl)-sn-glycero-3-phosphate + tetradecanoyl-CoA = 1-(9Z)-octadecenoyl-2-tetradecanoyl-sn-glycero-3-phosphate + CoA. It catalyses the reaction pentadecanoyl-CoA + 1-(9Z-octadecenoyl)-sn-glycero-3-phosphate = 1-(9Z)-octadecenoyl-2-pentadecanoyl-sn-glycero-3-phosphate + CoA. The catalysed reaction is nonadecanoyl-CoA + 1-(9Z-octadecenoyl)-sn-glycero-3-phosphate = 1-(9Z)-octadecenoyl-2-nonadecanoyl-sn-glycero-3-phosphate + CoA. The enzyme catalyses 1-hexadecanoyl-sn-glycero-3-phosphocholine + (9Z)-octadecenoyl-CoA = 1-hexadecanoyl-2-(9Z-octadecenoyl)-sn-glycero-3-phosphocholine + CoA. It carries out the reaction 1-O-hexadecyl-sn-glycero-3-phosphocholine + acetyl-CoA = 1-O-hexadecyl-2-acetyl-sn-glycero-3-phosphocholine + CoA. It catalyses the reaction 1-O-octadecyl-sn-glycero-3-phosphocholine + acetyl-CoA = 1-O-octadecyl-2-acetyl-sn-glycero-3-phosphocholine + CoA. The catalysed reaction is 1-hexadecanoyl-sn-glycero-3-phosphocholine + acetyl-CoA = 1-hexadecanoyl-2-acetyl-sn-glycero-3-phosphocholine + CoA. The enzyme catalyses 1-octadecanoyl-sn-glycero-3-phosphocholine + acetyl-CoA = 1-octadecanoyl-2-acetyl-sn-glycero-3-phosphocholine + CoA. It carries out the reaction a 1-O-(1Z-alkenyl)-sn-glycero-3-phosphocholine + acetyl-CoA = 1-O-(1Z)-alkenyl-2-acetyl-sn-glycero-3-phosphocholine + CoA. It catalyses the reaction 1-O-octadecyl-sn-glycero-3-phosphocholine + (5Z,8Z,11Z,14Z)-eicosatetraenoyl-CoA = 1-O-octadecyl-2-(5Z,8Z,11Z,14Z)-eicosatetraenoyl-sn-glycero-3-phosphocholine + CoA. It functions in the pathway lipid metabolism; phospholipid metabolism. Functionally, exhibits both acyltransferase and acetyltransferase activities. Activity is calcium-dependent. Catalyzes the conversion of lysophosphatidylcholine (1-acyl-sn-glycero-3-phosphocholine or LPC) into phosphatidylcholine (1,2-diacyl-sn-glycero-3-phosphocholine or PC). Catalyzes the conversion 1-acyl-sn-glycerol-3-phosphate (lysophosphatidic acid or LPA) into 1,2-diacyl-sn-glycerol-3-phosphate (phosphatidic acid or PA) by incorporating an acyl moiety at the sn-2 position of the glycerol backbone. Involved in platelet-activating factor (PAF) biosynthesis by catalyzing the conversion of the PAF precursor, 1-O-alkyl-sn-glycero-3-phosphocholine (lyso-PAF) into 1-O-alkyl-2-acetyl-sn-glycero-3-phosphocholine (PAF). Also converts lyso-PAF to 1-O-alkyl-2-acyl-sn-glycero-3-phosphocholine (PC), a major component of cell membranes and a PAF precursor. Under resting conditions, acyltransferase activity is preferred. Upon acute inflammatory stimulus, acetyltransferase activity is enhanced and PAF synthesis increases. Involved in the regulation of lipid droplet number and size. The protein is Lysophosphatidylcholine acyltransferase 2 (Lpcat2) of Rattus norvegicus (Rat).